Consider the following 463-residue polypeptide: Elongation factor 1-alpha 2 (463 aa).

N,N,N-trimethylglycine is present on G2. The tr-type G domain maps to 5-242 (KTHINIVVIG…DTILPPTRPT (238 aa)). Residues 14-21 (GHVDSGKS) form a G1 region. Residues D17, S18, G19, K20, S21, and T22 each contribute to the GTP site. Residue D17 participates in Mg(2+) binding. Residue K36 is modified to N6,N6,N6-trimethyllysine; alternate. K36 bears the N6,N6-dimethyllysine; alternate mark. K36 is modified (N6-methyllysine; alternate). The residue at position 55 (K55) is an N6,N6,N6-trimethyllysine. At K55 the chain carries N6,N6-dimethyllysine. Positions 70 to 74 (GITID) are G2. K79 carries the N6,N6,N6-trimethyllysine modification. A G3 region spans residues 91-94 (DAPG). Positions 153, 154, and 156 each coordinate GTP. The segment at 153–156 (NKMD) is G4. S163 is modified (phosphoserine). At K165 the chain carries N6,N6-dimethyllysine; alternate. K165 is modified (N6-methyllysine; alternate). N6,N6,N6-trimethyllysine; alternate; by EEF1AKMT3 is present on K165. K179 carries the N6-acetyllysine modification. S194, G195, and W196 together coordinate GTP. The G5 stretch occupies residues 194-196 (SGW). A Phosphoserine modification is found at S224. Residue T239 is modified to Phosphothreonine. 5-glutamyl glycerylphosphorylethanolamine is present on residues E301 and E374. An N6-acetyllysine modification is found at K439. The segment at 444 to 463 (KSGGAGKVTKSAQKAQKAGK) is disordered.

The protein belongs to the TRAFAC class translation factor GTPase superfamily. Classic translation factor GTPase family. EF-Tu/EF-1A subfamily. As to quaternary structure, homodimer; arranged in a 'head to tail' dimer configuration. Trimethylated at Lys-165 by EEF1AKMT3. Mono-, di-, and trimethylated at Lys-36 by EEF1AKMT4; trimethylated form is predominant. Methylation by EEF1AKMT4 contributes to the fine-tuning of translation rates for a subset of tRNAs. Trimethylated at the N-terminus and dimethylated at Lys-55 by METTL13.

Its subcellular location is the endoplasmic reticulum membrane. The enzyme catalyses GTP + H2O = GDP + phosphate + H(+). Translation elongation factor that catalyzes the GTP-dependent binding of aminoacyl-tRNA (aa-tRNA) to the A-site of ribosomes during the elongation phase of protein synthesis. Base pairing between the mRNA codon and the aa-tRNA anticodon promotes GTP hydrolysis, releasing the aa-tRNA from EEF1A1 and allowing its accommodation into the ribosome. The growing protein chain is subsequently transferred from the P-site peptidyl tRNA to the A-site aa-tRNA, extending it by one amino acid through ribosome-catalyzed peptide bond formation. This Bos taurus (Bovine) protein is Elongation factor 1-alpha 2 (EEF1A2).